The primary structure comprises 211 residues: Small ribosomal subunit protein uS5 (211 aa).

Positions 1 to 41 (MPGRERRDGGRSADDNKQNDRNERRGGGRRDDRRNQQQDER) are disordered. One can recognise an S5 DRBM domain in the interval 44 to 107 (YIERVVTINR…EEARKNFFRV (64 aa)).

This sequence belongs to the universal ribosomal protein uS5 family. In terms of assembly, part of the 30S ribosomal subunit. Contacts proteins S4 and S8.

In terms of biological role, with S4 and S12 plays an important role in translational accuracy. Located at the back of the 30S subunit body where it stabilizes the conformation of the head with respect to the body. The polypeptide is Small ribosomal subunit protein uS5 (Corynebacterium glutamicum (strain R)).